A 364-amino-acid chain; its full sequence is tRNA 2-selenouridine synthase (364 aa).

The Rhodanese domain maps to 14–137; sequence LIADTPIIDV…LRQTAIQATI (124 aa). The S-selanylcysteine intermediate role is filled by Cys97.

Belongs to the SelU family. In terms of assembly, monomer.

The enzyme catalyses 5-methylaminomethyl-2-thiouridine(34) in tRNA + selenophosphate + (2E)-geranyl diphosphate + H2O + H(+) = 5-methylaminomethyl-2-selenouridine(34) in tRNA + (2E)-thiogeraniol + phosphate + diphosphate. The catalysed reaction is 5-methylaminomethyl-2-thiouridine(34) in tRNA + (2E)-geranyl diphosphate = 5-methylaminomethyl-S-(2E)-geranyl-thiouridine(34) in tRNA + diphosphate. It carries out the reaction 5-methylaminomethyl-S-(2E)-geranyl-thiouridine(34) in tRNA + selenophosphate + H(+) = 5-methylaminomethyl-2-(Se-phospho)selenouridine(34) in tRNA + (2E)-thiogeraniol. It catalyses the reaction 5-methylaminomethyl-2-(Se-phospho)selenouridine(34) in tRNA + H2O = 5-methylaminomethyl-2-selenouridine(34) in tRNA + phosphate. In terms of biological role, involved in the post-transcriptional modification of the uridine at the wobble position (U34) of tRNA(Lys), tRNA(Glu) and tRNA(Gln). Catalyzes the conversion of 2-thiouridine (S2U-RNA) to 2-selenouridine (Se2U-RNA). Acts in a two-step process involving geranylation of 2-thiouridine (S2U) to S-geranyl-2-thiouridine (geS2U) and subsequent selenation of the latter derivative to 2-selenouridine (Se2U) in the tRNA chain. This chain is tRNA 2-selenouridine synthase, found in Shigella flexneri.